A 352-amino-acid polypeptide reads, in one-letter code: Thrombopoietin (352 aa).

The N-terminal stretch at 1–23 (MELTELLLVVMLLLTARLDPCLP) is a signal peptide. Cystine bridges form between C28-C172 and C50-C106. Residues N185, N197, N206, N234, and N255 are each glycosylated (N-linked (GlcNAc...) asparagine). The segment covering 233–245 (LNQTSRSLNQTPG) has biased composition (polar residues). Disordered regions lie at residues 233 to 259 (LNQT…GTHG) and 292 to 352 (YSPS…SQEE). Pro residues predominate over residues 311-327 (PTSPTPQNPLQPPPPDP). Residues N332 and N347 are each glycosylated (N-linked (GlcNAc...) asparagine).

This sequence belongs to the EPO/TPO family.

The protein resides in the secreted. Functionally, lineage-specific cytokine affecting the proliferation and maturation of megakaryocytes from their committed progenitor cells. It acts at a late stage of megakaryocyte development. It may be the major physiological regulator of circulating platelets. The sequence is that of Thrombopoietin (THPO) from Canis lupus familiaris (Dog).